The primary structure comprises 214 residues: Phosphatidyl-N-methylethanolamine N-methyltransferase (214 aa).

Topologically, residues 1–19 are lumenal; sequence MPLVALGVADLFNFVDYSK. The segment at residues 20 to 40 is an intramembrane region (helical); that stretch reads TSLAISAAAIAFNPTFWNIVA. Residues 41-52 lie on the Lumenal side of the membrane; the sequence is RREYRTKFLTRA. Residues 53–74 form a helical membrane-spanning segment; the sequence is FGGNAQVACYFLAVTIFGLGLV. Residues 75–101 lie on the Cytoplasmic side of the membrane; it reads RDFLYERALRDQPSHPLLEGTYVKYAA. Residues 102-122 traverse the membrane as a helical segment; that stretch reads YALLALGNLLVITSTMRLGIT. Residue 106–108 coordinates S-adenosyl-L-methionine; sequence ALG. Topologically, residues 123–165 are lumenal; the sequence is GTFLGDYFGILMDGIVTGFPFNVTSAPMYYGSTMSFLGTALLY. A helical transmembrane segment spans residues 166 to 186; it reads GKPAGLLLTAWVLFVYIIAIQ. Over 187-214 the chain is Cytoplasmic; the sequence is FENPFTAEIYAKRDRERAKAAGTSKKEL. An S-adenosyl-L-methionine-binding site is contributed by 188-189; that stretch reads EN.

Belongs to the class VI-like SAM-binding methyltransferase superfamily. PEMT/PEM2 methyltransferase family.

Its subcellular location is the endoplasmic reticulum membrane. The protein localises to the mitochondrion membrane. The catalysed reaction is a 1,2-diacyl-sn-glycero-3-phospho-N-methylethanolamine + S-adenosyl-L-methionine = a 1,2-diacyl-sn-glycero-3-phospho-N,N-dimethylethanolamine + S-adenosyl-L-homocysteine + H(+). It catalyses the reaction a 1,2-diacyl-sn-glycero-3-phospho-N,N-dimethylethanolamine + S-adenosyl-L-methionine = a 1,2-diacyl-sn-glycero-3-phosphocholine + S-adenosyl-L-homocysteine + H(+). Its pathway is phospholipid metabolism; phosphatidylcholine biosynthesis. In terms of biological role, catalyzes the second two steps of the methylation pathway of phosphatidylcholine biosynthesis, the SAM-dependent methylation of phosphatidylmonomethylethanolamine (PMME) to phosphatidyldimethylethanolamine (PDME) and of PDME to phosphatidylcholine (PC). In Neurospora crassa (strain ATCC 24698 / 74-OR23-1A / CBS 708.71 / DSM 1257 / FGSC 987), this protein is Phosphatidyl-N-methylethanolamine N-methyltransferase.